Consider the following 174-residue polypeptide: tRNA (cytidine(56)-2'-O)-methyltransferase (174 aa).

S-adenosyl-L-methionine-binding positions include Leu-80, 105-109 (GAEKV), and 123-130 (ISNQPHSE).

This sequence belongs to the aTrm56 family. In terms of assembly, homodimer.

Its subcellular location is the cytoplasm. The catalysed reaction is cytidine(56) in tRNA + S-adenosyl-L-methionine = 2'-O-methylcytidine(56) in tRNA + S-adenosyl-L-homocysteine + H(+). Its function is as follows. Specifically catalyzes the AdoMet-dependent 2'-O-ribose methylation of cytidine at position 56 in tRNAs. The chain is tRNA (cytidine(56)-2'-O)-methyltransferase from Metallosphaera sedula (strain ATCC 51363 / DSM 5348 / JCM 9185 / NBRC 15509 / TH2).